The chain runs to 232 residues: Small ribosomal subunit protein uS2 (232 aa).

It belongs to the universal ribosomal protein uS2 family.

The protein is Small ribosomal subunit protein uS2 of Alkaliphilus oremlandii (strain OhILAs) (Clostridium oremlandii (strain OhILAs)).